Here is a 47-residue protein sequence, read N- to C-terminus: uncharacterized protein (47 aa).

The signal sequence occupies residues 1–18; that stretch reads MKKWLLIIAGALIISACA. Residues 28 to 47 are disordered; sequence EGSHSGVKFDKDSRQWGLNQ.

This is an uncharacterized protein from Haemophilus influenzae (strain ATCC 51907 / DSM 11121 / KW20 / Rd).